We begin with the raw amino-acid sequence, 148 residues long: Snaclec flavocetin-A subunit beta (148 aa).

Positions 1–23 (MGQFIFVSFGFLVVATSLSGTEA) are cleaved as a signal peptide. Intrachain disulfides connect Cys-27–Cys-38, Cys-55–Cys-144, and Cys-121–Cys-136. The 112-residue stretch at 34 to 145 (YDEHCYQVFQ…CSSKRYVVCK (112 aa)) folds into the C-type lectin domain.

Belongs to the snaclec family. In terms of assembly, tetramer of heterodimers of alpha and beta subunits (alphabeta)(4); disulfide-linked. In terms of tissue distribution, expressed by the venom gland.

It localises to the secreted. In terms of biological role, strong platelet aggregation inhibitor. Binds specifically to platelet glycoprotein Ibalpha (GP1BA) with high affinity and inhibits vWF-dependent platelet aggregation. Has also been observed to induce small agglutinates in washed platelets by binding to GPIb. The chain is Snaclec flavocetin-A subunit beta from Protobothrops flavoviridis (Habu).